The primary structure comprises 378 residues: Beta sliding clamp (378 aa).

This sequence belongs to the beta sliding clamp family. Forms a ring-shaped head-to-tail homodimer around DNA which binds and tethers DNA polymerases and other proteins to the DNA. The DNA replisome complex has a single clamp-loading complex (3 tau and 1 each of delta, delta', psi and chi subunits) which binds 3 Pol III cores (1 core on the leading strand and 2 on the lagging strand) each with a beta sliding clamp dimer. Additional proteins in the replisome are other copies of gamma, psi and chi, Ssb, DNA helicase and RNA primase.

The protein resides in the cytoplasm. Its function is as follows. Confers DNA tethering and processivity to DNA polymerases and other proteins. Acts as a clamp, forming a ring around DNA (a reaction catalyzed by the clamp-loading complex) which diffuses in an ATP-independent manner freely and bidirectionally along dsDNA. Initially characterized for its ability to contact the catalytic subunit of DNA polymerase III (Pol III), a complex, multichain enzyme responsible for most of the replicative synthesis in bacteria; Pol III exhibits 3'-5' exonuclease proofreading activity. The beta chain is required for initiation of replication as well as for processivity of DNA replication. The sequence is that of Beta sliding clamp (dnaN) from Streptococcus pneumoniae (strain ATCC BAA-255 / R6).